The sequence spans 124 residues: Hemoglobin subunit alpha (124 aa).

The Globin domain occupies 1–124 (PLSAADKTII…VAKALSSHYR (124 aa)). Position 57 (histidine 57) interacts with O2. Histidine 79 contributes to the heme b binding site.

It belongs to the globin family. Hb 1 is a heterotetramer of two alpha and two beta-1 chains. Hb 2 is a heterotetramer of two alpha and two beta-2 chains. Hb 3 is a heterotetramer of two alpha and two beta-3 chains. As to expression, red blood cells (at protein level).

Its function is as follows. Involved in oxygen transport from gills to the various peripheral tissues. This is Hemoglobin subunit alpha from Somniosus microcephalus (Greenland sleeper shark).